A 151-amino-acid polypeptide reads, in one-letter code: Large ribosomal subunit protein uL15 (151 aa).

The tract at residues 1 to 57 (MTLRLDSLKANKGARRRKLRKGRGIAAGQGASCGFGMRGQKSRSGRPTRPGFEGGQM) is disordered. Residues 12-23 (KGARRRKLRKGR) are compositionally biased toward basic residues. Over residues 25–37 (IAAGQGASCGFGM) the composition is skewed to gly residues.

The protein belongs to the universal ribosomal protein uL15 family. In terms of assembly, part of the 50S ribosomal subunit.

Binds to the 23S rRNA. The protein is Large ribosomal subunit protein uL15 of Synechococcus sp. (strain CC9902).